The sequence spans 326 residues: Ankyrin repeat domain-containing protein 9 (326 aa).

Residues 1–20 (MPWDTRPGRSANGGPEGPGA) are disordered. An ANK 1 repeat occupies 70–99 (SPSEALLYALVHDHQAYAHYLLATFPRCAL). The short motif at 108 to 109 (CC) is the Important role in both nutrient sensing and binding/regulation of IMPDH2 element. ANK repeat units follow at residues 111–140 (APGP…DFPV) and 157–186 (GGGT…SPGL).

As to quaternary structure, part of an E3 ubiquitin-protein ligase complex with Elongin BC (ELOB and ELOC), CUL5 and ANKRD9. Interacts with IMPDH2; leading to ubiquitination of IMPDH2 and its subsequent proteasomal degradation.

It localises to the cytoplasmic vesicle. The protein localises to the cytoplasm. The protein resides in the cytosol. It functions in the pathway protein modification; protein ubiquitination. Substrate receptor subunit of a cullin-RING superfamily E3 ligase complex (CUL5-based E3 ubiquitin ligase complex) which mediates the ubiquitination and subsequent proteasomal degradation of target proteins. Depending of the metabolic state of the cell, promotes the proteasomal degradation of IMPDH2, the rate-limiting enzyme in GTP biosynthesis or protects IMPDH2 by stabilizing IMPDH2 filaments assembly. Implicated in different cellular processes, like copper homeostasis and cell proliferation. The chain is Ankyrin repeat domain-containing protein 9 (Ankrd9) from Mus musculus (Mouse).